Consider the following 354-residue polypeptide: NADPH dehydrogenase (354 aa).

Serine 23, proline 24, cysteine 26, alanine 58, and glutamine 100 together coordinate FMN. Tyrosine 182 functions as the Proton donor in the catalytic mechanism. Arginine 230, leucine 301, glycine 323, and arginine 324 together coordinate FMN.

This sequence belongs to the NADH:flavin oxidoreductase/NADH oxidase family. NamA subfamily. In terms of assembly, homodimer. Behaves as an active monomer in solution while in the crystal packing assembles following the classical dimeric architecture of other thermophilic-like ene-reductases. It depends on FMN as a cofactor.

It catalyses the reaction A + NADPH + H(+) = AH2 + NADP(+). Its function is as follows. Ene-reductase that catalyzes the stereoselective reduction of activated C-C double bonds. Shows very good activity with 4-ketoisophorone, 2-cyclohexen-1-one and 1-octen-3-one, and low activity with maleimide, 2-methyl-pentenal, 2-methyl-cyclohexen-1-one, 2-cyclopenten-1-one and trans-2-hexen-1-al. Shows the highest catalytic efficiency with ketoisophorone. Exhibits a restricted substrate spectrum with generally lower activities compared to other ene-reductases. This is NADPH dehydrogenase from Chloroflexus aggregans (strain MD-66 / DSM 9485).